The following is a 129-amino-acid chain: D-ribose pyranase (129 aa).

Residue H20 is the Proton donor of the active site. Substrate is bound by residues D28, H96, and 118-120 (YAN).

Belongs to the RbsD / FucU family. RbsD subfamily. In terms of assembly, homodecamer.

Its subcellular location is the cytoplasm. It carries out the reaction beta-D-ribopyranose = beta-D-ribofuranose. Its pathway is carbohydrate metabolism; D-ribose degradation; D-ribose 5-phosphate from beta-D-ribopyranose: step 1/2. Catalyzes the interconversion of beta-pyran and beta-furan forms of D-ribose. This Streptomyces avermitilis (strain ATCC 31267 / DSM 46492 / JCM 5070 / NBRC 14893 / NCIMB 12804 / NRRL 8165 / MA-4680) protein is D-ribose pyranase.